We begin with the raw amino-acid sequence, 159 residues long: Large ribosomal subunit protein uL11 (159 aa).

The protein belongs to the universal ribosomal protein uL11 family. Part of the ribosomal stalk of the 50S ribosomal subunit. Interacts with L10 and the large rRNA to form the base of the stalk. L10 forms an elongated spine to which L12 dimers bind in a sequential fashion forming a multimeric L10(L12)X complex.

Forms part of the ribosomal stalk which helps the ribosome interact with GTP-bound translation factors. This chain is Large ribosomal subunit protein uL11, found in Methanothrix thermoacetophila (strain DSM 6194 / JCM 14653 / NBRC 101360 / PT) (Methanosaeta thermophila).